We begin with the raw amino-acid sequence, 215 residues long: Cytochrome b6 (215 aa).

The chain crosses the membrane as a helical span at residues 32–52 (IFYCLGGIVFVSFLIQVATGF). C35 is a binding site for heme c. Heme b is bound by residues H86 and H100. Helical transmembrane passes span 90 to 110 (VSMM…TGGF), 116 to 136 (LTWV…VTGY), and 186 to 206 (LHTF…FLMI). Heme b contacts are provided by H187 and H202.

This sequence belongs to the cytochrome b family. PetB subfamily. As to quaternary structure, the 4 large subunits of the cytochrome b6-f complex are cytochrome b6, subunit IV (17 kDa polypeptide, PetD), cytochrome f and the Rieske protein, while the 4 small subunits are PetG, PetL, PetM and PetN. The complex functions as a dimer. The cofactor is heme b. Heme c serves as cofactor.

It is found in the plastid. The protein resides in the chloroplast thylakoid membrane. Functionally, component of the cytochrome b6-f complex, which mediates electron transfer between photosystem II (PSII) and photosystem I (PSI), cyclic electron flow around PSI, and state transitions. The sequence is that of Cytochrome b6 from Pyropia yezoensis (Susabi-nori).